The following is a 358-amino-acid chain: Phenylalanine--tRNA ligase alpha subunit (358 aa).

Residue Glu279 coordinates Mg(2+).

Belongs to the class-II aminoacyl-tRNA synthetase family. Phe-tRNA synthetase alpha subunit type 1 subfamily. As to quaternary structure, tetramer of two alpha and two beta subunits. The cofactor is Mg(2+).

It localises to the cytoplasm. The catalysed reaction is tRNA(Phe) + L-phenylalanine + ATP = L-phenylalanyl-tRNA(Phe) + AMP + diphosphate + H(+). This Variovorax paradoxus (strain S110) protein is Phenylalanine--tRNA ligase alpha subunit.